A 213-amino-acid chain; its full sequence is StAR-related lipid transfer protein 5 (213 aa).

Positions 1–213 constitute an START domain; the sequence is MDLATAAQVS…LEKAVKKFFG (213 aa).

May be involved in the intracellular transport of sterols or other lipids. May bind cholesterol or other sterols. This Bos taurus (Bovine) protein is StAR-related lipid transfer protein 5 (STARD5).